The following is a 155-amino-acid chain: Ribonuclease H (155 aa).

One can recognise an RNase H type-1 domain in the interval 1 to 146 (MPELFAYTDG…ADELARAGMK (146 aa)). The Mg(2+) site is built by D9, E52, D74, and D138.

This sequence belongs to the RNase H family. As to quaternary structure, monomer. Mg(2+) serves as cofactor.

The protein localises to the cytoplasm. The catalysed reaction is Endonucleolytic cleavage to 5'-phosphomonoester.. Endonuclease that specifically degrades the RNA of RNA-DNA hybrids. This is Ribonuclease H from Ruegeria pomeroyi (strain ATCC 700808 / DSM 15171 / DSS-3) (Silicibacter pomeroyi).